The chain runs to 160 residues: MISEASSRPGFITAPADPVGEYPRASRRFESALLHIEVLSAMNIEKLLGGFANVAAILTPLVAVLAYSRFLWERRQKRLRLESYLREQKLFECTGQHSFLHLVATLGMFEADIMDASYRSKVISRNVAVDVAGEPVRIVLEYEPDDLEKELPKRPGRGQF.

The helical transmembrane segment at 47–67 threads the bilayer; the sequence is LLGGFANVAAILTPLVAVLAY.

Its subcellular location is the membrane. This is an uncharacterized protein from Sinorhizobium fredii (strain NBRC 101917 / NGR234).